Consider the following 173-residue polypeptide: Peptidyl-prolyl cis-trans isomerase 3 (173 aa).

Residues 7-170 form the PPIase cyclophilin-type domain; it reads FFDITIGGKA…KDCMIADCGQ (164 aa).

It belongs to the cyclophilin-type PPIase family. In terms of tissue distribution, exclusively expressed in the single anterior excretory cell.

The catalysed reaction is [protein]-peptidylproline (omega=180) = [protein]-peptidylproline (omega=0). Its function is as follows. Catalyzes the cis-trans isomerization of proline imidic peptide bonds in oligopeptides. Plays a role in protein folding, transport and assembly. This is Peptidyl-prolyl cis-trans isomerase 3 (cyn-3) from Caenorhabditis elegans.